Consider the following 507-residue polypeptide: CWF19-like protein DRN1 (507 aa).

The residue at position 242 (S242) is a Phosphoserine.

The protein belongs to the CWF19 family. Interacts with DBR1. Interacts with SYF1, a component of the NTC complex. Interacts with lariat-introns and lariat-intermediates.

The protein resides in the nucleus. Its subcellular location is the cytoplasm. Involved in branched RNA metabolism, modulating the turnover of lariat-intron pre-mRNAs by the lariat-debranching enzyme DBR1. Enhances the debranching activity of DBR1 in vitro. This chain is CWF19-like protein DRN1 (DRN1), found in Saccharomyces cerevisiae (strain ATCC 204508 / S288c) (Baker's yeast).